Reading from the N-terminus, the 421-residue chain is Tubulin gamma-3 chain (421 aa).

94–100 (AGGTGSG) is a GTP binding site.

The protein belongs to the tubulin family.

It is found in the cytoplasm. Its subcellular location is the cytoskeleton. The protein resides in the microtubule organizing center. In terms of biological role, tubulin is the major constituent of microtubules. The gamma chain is found at microtubule organizing centers (MTOC) such as the spindle poles, suggesting that it is involved in the minus-end nucleation of microtubule assembly. The protein is Tubulin gamma-3 chain (TUBG3) of Zea mays (Maize).